The primary structure comprises 388 residues: Succinate--CoA ligase [ADP-forming] subunit beta (388 aa).

The 236-residue stretch at 9–244 (KQLFAEYGLP…PSQDDAREAH (236 aa)) folds into the ATP-grasp domain. Residues K46, 53-55 (GRG), E99, T102, and E107 each bind ATP. Mg(2+) is bound by residues N199 and D213. Substrate is bound by residues N264 and 321 to 323 (GIV).

Belongs to the succinate/malate CoA ligase beta subunit family. As to quaternary structure, heterotetramer of two alpha and two beta subunits. Mg(2+) is required as a cofactor.

The enzyme catalyses succinate + ATP + CoA = succinyl-CoA + ADP + phosphate. It catalyses the reaction GTP + succinate + CoA = succinyl-CoA + GDP + phosphate. It participates in carbohydrate metabolism; tricarboxylic acid cycle; succinate from succinyl-CoA (ligase route): step 1/1. Its function is as follows. Succinyl-CoA synthetase functions in the citric acid cycle (TCA), coupling the hydrolysis of succinyl-CoA to the synthesis of either ATP or GTP and thus represents the only step of substrate-level phosphorylation in the TCA. The beta subunit provides nucleotide specificity of the enzyme and binds the substrate succinate, while the binding sites for coenzyme A and phosphate are found in the alpha subunit. This Pseudomonas paraeruginosa (strain DSM 24068 / PA7) (Pseudomonas aeruginosa (strain PA7)) protein is Succinate--CoA ligase [ADP-forming] subunit beta.